A 541-amino-acid polypeptide reads, in one-letter code: Plasminogen-binding protein PgbB (541 aa).

Composition is skewed to basic and acidic residues over residues 420–434 (HKAK…ENKV) and 446–455 (VKTRRPEPTK). Residues 420 to 541 (HKAKENKQPL…RRKALEMNKK (122 aa)) are disordered. Positions 456–476 (DQNNAIQQGETKNNESKNTPI) are enriched in polar residues. Over residues 480-541 (NAAKKEAPKP…RRKALEMNKK (62 aa)) the composition is skewed to basic and acidic residues.

It localises to the cell surface. In terms of biological role, binds plasminogen, specifically, and in a concentration and lysine-dependent manner. Plasminogen is the precursor of plasmin, a serine protease that cleaves fibrin, fibronectin, laminin and vitronectin. Acquisition of plasminogen/plasmin could enable H.pylori to degrade host components. The sequence is that of Plasminogen-binding protein PgbB (pgbB) from Helicobacter pylori (strain J99 / ATCC 700824) (Campylobacter pylori J99).